The chain runs to 343 residues: Succinylglutamate desuccinylase (343 aa).

Zn(2+)-binding residues include His-60, Glu-63, and His-157. Residue Glu-221 is part of the active site.

The protein belongs to the AspA/AstE family. Succinylglutamate desuccinylase subfamily. The cofactor is Zn(2+).

It catalyses the reaction N-succinyl-L-glutamate + H2O = L-glutamate + succinate. It participates in amino-acid degradation; L-arginine degradation via AST pathway; L-glutamate and succinate from L-arginine: step 5/5. Functionally, transforms N(2)-succinylglutamate into succinate and glutamate. The sequence is that of Succinylglutamate desuccinylase from Idiomarina loihiensis (strain ATCC BAA-735 / DSM 15497 / L2-TR).